The sequence spans 292 residues: uncharacterized protein (292 aa).

Residues 13-35 form a helical membrane-spanning segment; that stretch reads LFILFIIVVCIYLLPRVAINAFY.

This sequence belongs to the serine esterase family.

The protein localises to the membrane. This is an uncharacterized protein from Salmonella typhi.